The primary structure comprises 88 residues: Small ribosomal subunit protein uS15 (88 aa).

The protein belongs to the universal ribosomal protein uS15 family. Part of the 30S ribosomal subunit. Forms a bridge to the 50S subunit in the 70S ribosome, contacting the 23S rRNA.

In terms of biological role, one of the primary rRNA binding proteins, it binds directly to 16S rRNA where it helps nucleate assembly of the platform of the 30S subunit by binding and bridging several RNA helices of the 16S rRNA. Its function is as follows. Forms an intersubunit bridge (bridge B4) with the 23S rRNA of the 50S subunit in the ribosome. This is Small ribosomal subunit protein uS15 from Mycoplasma mobile (strain ATCC 43663 / 163K / NCTC 11711) (Mesomycoplasma mobile).